Here is a 103-residue protein sequence, read N- to C-terminus: MGNYYSRRKSRKHITTVALIILLLLLFLFLYAKASSSSPNIHHHSTHGSLKKSGNLDPKLHDLDSNAASSRGSKYTNYEGGGEDVFEDGKRRVFTGPNPLHNR.

The first 34 residues, 1–34, serve as a signal peptide directing secretion; it reads MGNYYSRRKSRKHITTVALIILLLLLFLFLYAKA. Positions 37 to 103 are disordered; it reads SSPNIHHHST…FTGPNPLHNR (67 aa). Residues 41–50 are compositionally biased toward basic residues; the sequence is IHHHSTHGSL. Polar residues predominate over residues 66 to 76; sequence NAASSRGSKYT. Position 97 is a hydroxyproline (Pro97). O-linked (Ara...) hydroxyproline glycosylation occurs at Pro97.

It belongs to the CLV3/ESR signal peptide family. In terms of processing, the O-glycosylation (arabinosylation) of the hydroxyproline Pro-97 enhances binding affinity of the CLE22p peptide for its receptor. As to expression, mostly expressed in stems and apex, and, to a lower extent, in seedlings, leaves, flowers and siliques.

The protein resides in the secreted. It is found in the extracellular space. Extracellular signal peptide that regulates cell fate. Represses root apical meristem maintenance. This Arabidopsis thaliana (Mouse-ear cress) protein is CLAVATA3/ESR (CLE)-related protein 22.